The primary structure comprises 247 residues: Capsid protein (247 aa).

The DNA-binding stretch occupies residues Met-1–Arg-40. The segment at Arg-15–Thr-44 is nuclear localization signals.

This sequence belongs to the circoviridae capsid protein family. In terms of assembly, homomultimer. Assembles in the nucleus, presumably in an immature form, then migrates to the cytoplasm once assembled as mature virion. Interacts with Rep; this interaction relocates Rep into the nucleus.

The protein resides in the host nucleus. It localises to the virion. In terms of biological role, self-assembles to form the virion icosahedral capsid with a T=1 symmetry. This very small capsid (17 - 22 nm in diameter) allows the virus to be very stable in the environment and resistant to some disinfectants, including detergents. Essential for the initial attachment to heparan sulfate moieties and chondroitin sulfate B of the host cell surface proteoglycans. After attachment, the virus is endocytosed and traffics to the nucleus. The capsid protein binds and transports the viral genome and Rep across the nuclear envelope. The polypeptide is Capsid protein (Cap) (Beak and feather disease virus (BFDV)).